The chain runs to 335 residues: HTH-type transcriptional regulator MalR (335 aa).

The HTH lacI-type domain maps to 1–55 (MNIKDIARLSGVGVSTVSRVINNHPDVKQSTREKVLQIIKDSNYIPNNSARILKQ). The H-T-H motif DNA-binding region spans 3-22 (IKDIARLSGVGVSTVSRVIN).

Its function is as follows. Repressor of glucanotransferase gene expression. The sequence is that of HTH-type transcriptional regulator MalR from Clostridium butyricum.